The chain runs to 85 residues: Large ribosomal subunit protein bL27 (85 aa).

Belongs to the bacterial ribosomal protein bL27 family.

This chain is Large ribosomal subunit protein bL27, found in Cellvibrio japonicus (strain Ueda107) (Pseudomonas fluorescens subsp. cellulosa).